Reading from the N-terminus, the 695-residue chain is Lupanine 17-hydroxylase [cytochrome c] (695 aa).

A signal peptide spans 1-26 (MSANKNIWIIRLGVAFVCVAIGAAQA). The 80-residue stretch at 598-677 (AMAESGRHIF…ALQAFILQKA (80 aa)) folds into the Cytochrome c domain. Positions 612, 615, and 616 each coordinate heme c.

The protein belongs to the bacterial PQQ dehydrogenase family. As to quaternary structure, monomer. The cofactor is pyrroloquinoline quinone. Heme c serves as cofactor.

The protein localises to the periplasm. The enzyme catalyses lupanine + 2 Fe(III)-[cytochrome c] + H2O = 17-hydroxylupanine + 2 Fe(II)-[cytochrome c] + 2 H(+). Its function is as follows. Catalyzes the first reaction in the catabolism of the alkaloid lupanine. It dehydrogenates lupanine, which can then be hydrated to produce 17-hydroxylupanine. The chain is Lupanine 17-hydroxylase [cytochrome c] (luh) from Pseudomonas sp.